Here is a 536-residue protein sequence, read N- to C-terminus: SNW domain-containing protein 1 (536 aa).

Residues 1–44 are disordered; sequence MALTSFLPAPTQLSQDQLEAEERARSQRSLQTSLVSSRREPPPY. An N-acetylalanine modification is found at Ala2. Ser14 bears the Phosphoserine mark. The span at 27–36 shows a compositional bias: polar residues; it reads QRSLQTSLVS. An interaction with PPIL1 region spans residues 59–79; that stretch reads GDGGAFPEIHVAQYPLDMGRK. Glycyl lysine isopeptide (Lys-Gly) (interchain with G-Cter in SUMO2) cross-links involve residues Lys81, Lys97, Lys115, Lys122, Lys141, Lys158, and Lys170. The tract at residues 174–339 is SNW; the sequence is AQYIRYTPSQ…KARERRAGIK (166 aa). Phosphoserine is present on residues Ser182 and Ser190. Residue Lys193 forms a Glycyl lysine isopeptide (Lys-Gly) (interchain with G-Cter in SUMO2) linkage. Residues 212–233 form a disordered region; that stretch reads FKINKKIPRGPPSPPAPVMHSP. 3 positions are modified to phosphoserine: Ser224, Ser232, and Ser234. Residues Lys240, Lys258, Lys286, Lys339, Lys344, Lys416, and Lys441 each participate in a glycyl lysine isopeptide (Lys-Gly) (interchain with G-Cter in SUMO2) cross-link. Residues 311–386 form a disordered region; it reads KMAQKEKEKH…RSKLQRNENR (76 aa). Ser446 is modified (phosphoserine). Residue Lys452 forms a Glycyl lysine isopeptide (Lys-Gly) (interchain with G-Cter in SUMO2) linkage. Basic and acidic residues-rich tracts occupy residues 467 to 489 and 503 to 530; these read IKTNRFVPDKEFSGSDRKQRGRE and KFLEEAKQHGGSKRPSDSSRPKEHEHEG. The disordered stretch occupies residues 467–536; it reads IKTNRFVPDK…EHEGKKRRKE (70 aa). Residues Ser479 and Ser481 each carry the phosphoserine modification. A Glycyl lysine isopeptide (Lys-Gly) (interchain with G-Cter in SUMO2) cross-link involves residue Lys509.

The protein belongs to the SNW family. As to quaternary structure, identified in the spliceosome C complex. Associates with U4/U6-U5 tri-small nuclear ribonucleoproteins (U4/U6-U5 tri-snRNPs). Component of the minor spliceosome, which splices U12-type introns. Interacts with SKI, SMAD2,SMAD3, RBPJ, RB1, PABPN1, MAGEA1, SIRT1, FOXN3, U2AF2, PPIL1, DAXX and ATP1B4. Interacts with VDR and RXRA; preferentially associates with VDR:RXRA heterodimers. Interacts with NCOR2. Interacts with MAML1. Interacts with NOTCH1 NICD; the interaction involves multimerized NOTCH1 NICD. Forms a complex with NOTCH1 NICD and MAML1; the association is dissociated by RBPJ. Associates with positive transcription elongation factor b (P-TEFb). Component of the SNARP complex which consists at least of SNIP1, SNW1, THRAP3, BCLAF1 and PNN.

It is found in the nucleus. Involved in pre-mRNA splicing as component of the spliceosome. As a component of the minor spliceosome, involved in the splicing of U12-type introns in pre-mRNAs. Required in the specific splicing of CDKN1A pre-mRNA; the function probably involves the recruitment of U2AF2 to the mRNA. May recruit PPIL1 to the spliceosome. May be involved in cyclin-D1/CCND1 mRNA stability through the SNARP complex which associates with both the 3'end of the CCND1 gene and its mRNA. Involved in transcriptional regulation. Modulates TGF-beta-mediated transcription via association with SMAD proteins, MYOD1-mediated transcription via association with PABPN1, RB1-mediated transcriptional repression, and retinoid-X receptor (RXR)- and vitamin D receptor (VDR)-dependent gene transcription in a cell line-specific manner probably involving coactivators NCOA1 and GRIP1. Is involved in NOTCH1-mediated transcriptional activation. Binds to multimerized forms of Notch intracellular domain (NICD) and is proposed to recruit transcriptional coactivators such as MAML1 to form an intermediate preactivation complex which associates with DNA-bound CBF-1/RBPJ to form a transcriptional activation complex by releasing SNW1 and redundant NOTCH1 NICD. This chain is SNW domain-containing protein 1 (Snw1), found in Mus musculus (Mouse).